We begin with the raw amino-acid sequence, 106 residues long: Large ribosomal subunit protein uL24 (106 aa).

Residues 84–97 (EKIGRELGAKEKAR) are compositionally biased toward basic and acidic residues. The segment at 84 to 106 (EKIGRELGAKEKARLQKRKAAAK) is disordered.

It belongs to the universal ribosomal protein uL24 family. Part of the 50S ribosomal subunit.

Functionally, one of two assembly initiator proteins, it binds directly to the 5'-end of the 23S rRNA, where it nucleates assembly of the 50S subunit. In terms of biological role, one of the proteins that surrounds the polypeptide exit tunnel on the outside of the subunit. The polypeptide is Large ribosomal subunit protein uL24 (Anaeromyxobacter sp. (strain K)).